An 81-amino-acid chain; its full sequence is Large ribosomal subunit protein bL27m (81 aa).

Positions 1-11 are enriched in polar residues; the sequence is MATKKSGGSSR. The disordered stretch occupies residues 1–20; the sequence is MATKKSGGSSRNGRDSKGRR.

It belongs to the bacterial ribosomal protein bL27 family.

It localises to the mitochondrion. This Reclinomonas americana protein is Large ribosomal subunit protein bL27m (RPL27).